Here is a 550-residue protein sequence, read N- to C-terminus: Arginine--tRNA ligase (550 aa).

The 'HIGH' region motif lies at 130-140; that stretch reads ANPTGPIHLGG.

Belongs to the class-I aminoacyl-tRNA synthetase family. As to quaternary structure, monomer.

The protein resides in the cytoplasm. The enzyme catalyses tRNA(Arg) + L-arginine + ATP = L-arginyl-tRNA(Arg) + AMP + diphosphate. The protein is Arginine--tRNA ligase of Rhodococcus jostii (strain RHA1).